Here is a 501-residue protein sequence, read N- to C-terminus: Glutamyl-tRNA(Gln) amidotransferase subunit A (501 aa).

Active-site charge relay system residues include Lys-80 and Ser-155. Ser-179 (acyl-ester intermediate) is an active-site residue.

The protein belongs to the amidase family. GatA subfamily. As to quaternary structure, heterotrimer of A, B and C subunits.

The enzyme catalyses L-glutamyl-tRNA(Gln) + L-glutamine + ATP + H2O = L-glutaminyl-tRNA(Gln) + L-glutamate + ADP + phosphate + H(+). Its function is as follows. Allows the formation of correctly charged Gln-tRNA(Gln) through the transamidation of misacylated Glu-tRNA(Gln) in organisms which lack glutaminyl-tRNA synthetase. The reaction takes place in the presence of glutamine and ATP through an activated gamma-phospho-Glu-tRNA(Gln). The protein is Glutamyl-tRNA(Gln) amidotransferase subunit A of Cupriavidus necator (strain ATCC 17699 / DSM 428 / KCTC 22496 / NCIMB 10442 / H16 / Stanier 337) (Ralstonia eutropha).